Here is a 335-residue protein sequence, read N- to C-terminus: Phosphate acyltransferase (335 aa).

Belongs to the PlsX family. As to quaternary structure, homodimer. Probably interacts with PlsY.

It is found in the cytoplasm. The catalysed reaction is a fatty acyl-[ACP] + phosphate = an acyl phosphate + holo-[ACP]. The protein operates within lipid metabolism; phospholipid metabolism. In terms of biological role, catalyzes the reversible formation of acyl-phosphate (acyl-PO(4)) from acyl-[acyl-carrier-protein] (acyl-ACP). This enzyme utilizes acyl-ACP as fatty acyl donor, but not acyl-CoA. The polypeptide is Phosphate acyltransferase (Brevibacillus brevis (strain 47 / JCM 6285 / NBRC 100599)).